Reading from the N-terminus, the 1392-residue chain is MTNEKVWIEKLDNPTLSVLPHDFLRPQQEPYTKQATYSLQLPQLDVPHDSFSNKYAVALSVWAALIYRVTGDDDIVLYIANNKILRFNIQPTWSFNELYSTINNELNKLNSIEANFSFDELAEKIQSCQDLERTPQLFRLAFLENQDFKLDEFKHHLVDFALNLDTSNNAHVLNLIYNSLLYSNERVTIVADQFTQYLTAALSDPSNCITKISLITASSKDSLPDPTKNLGWCDFVGCIHDIFQDNAEAFPERTCVVETPTLNSDKSRSFTYRDINRTSNIVAHYLIKTGIKRGDVVMIYSSRGVDLMVCVMGVLKAGATFSVIDPAYPPARQTIYLGVAKPRGLIVIRAAGQLDQLVEDYINDELEIVSRINSIAIQENGTIEGGKLDNGEDVLAPYDHYKDTRTGVVVGPDSNPTLSFTSGSEGIPKGVLGRHFSLAYYFNWMSKRFNLTENDKFTMLSGIAHDPIQRDMFTPLFLGAQLYVPTQDDIGTPGRLAEWMSKYGCTVTHLTPAMGQLLTAQATTPFPKLHHAFFVGDILTKRDCLRLQTLAENCRIVNMYGTTETQRAVSYFEVKSKNDDPNFLKKLKDVMPAGKGMLNVQLLVVNRNDRTQICGIGEIGEIYVRAGGLAEGYRGLPELNKEKFVNNWFVEKDHWNYLDKDNGEPWRQFWLGPRDRLYRTGDLGRYLPNGDCECCGRADDQVKIRGFRIELGEIDTHISQHPLVRENITLVRKNADNEPTLITFMVPRFDKPDDLSKFQSDVPKEVETDPIVKGLIGYHLLSKDIRTFLKKRLASYAMPSLIVVMDKLPLNPNGKVDKPKLQFPTPKQLNLVAENTVSETDDSQFTNVEREVRDLWLSILPTKPASVSPDDSFFDLGGHSILATKMIFTLKKKLQVDLPLGTIFKYPTIKAFAAEIDRIKSSGGSSQGEVVENVTANYAEDAKKLVETLPSSYPSREYFVEPNSAEGKTTINVFVTGVTGFLGSYILADLLGRSPKNYSFKVFAHVRAKDEEAAFARLQKAGITYGTWNEKFASNIKVVLGDLSKSQFGLSDEKWMDLANTVDIIIHNGALVHWVYPYAKLRDPNVISTINVMSLAAVGKPKFFDFVSSTSTLDTEYYFNLSDKLVSEGKPGILESDDLMNSASGLTGGYGQSKWAAEYIIRRAGERGLRGCIVRPGYVTGASANGSSNTDDFLLRFLKGSVQLGKIPDIENSVNMVPVDHVARVVVATSLNPPKENELAVAQVTGHPRILFKDYLYTLHDYGYDVEIESYSKWKKSLEASVIDRNEENALYPLLHMVLDNLPESTKAPELDDRNAVASLKKDTAWTGVDWSNGIGVTPEEVGIYIAFLNKVGFLPPPTHNDKLPLPSIELTQAQISLVASGAGARGSSAAA.

Lys-541 participates in a covalent cross-link: Glycyl lysine isopeptide (Lys-Gly) (interchain with G-Cter in ubiquitin). Residues 843–920 form the Carrier domain; the sequence is SQFTNVEREV…AFAAEIDRIK (78 aa). An O-(pantetheine 4'-phosphoryl)serine modification is found at Ser-880. Residue Lys-1276 forms a Glycyl lysine isopeptide (Lys-Gly) (interchain with G-Cter in ubiquitin) linkage.

This sequence belongs to the ATP-dependent AMP-binding enzyme family. The cofactor is pantetheine 4'-phosphate.

It carries out the reaction (S)-2-amino-6-oxohexanoate + NADP(+) + H2O = L-2-aminoadipate + NADPH + 2 H(+). It catalyses the reaction (S)-2-amino-6-oxohexanoate + NAD(+) + H2O = L-2-aminoadipate + NADH + 2 H(+). The enzyme catalyses (S)-2-amino-6-oxohexanoate + AMP + diphosphate + NADP(+) = L-2-aminoadipate + ATP + NADPH + H(+). Its pathway is amino-acid biosynthesis; L-lysine biosynthesis via AAA pathway; L-lysine from L-alpha-aminoadipate (fungal route): step 1/3. Functionally, catalyzes the activation of alpha-aminoadipate by ATP-dependent adenylation and the reduction of activated alpha-aminoadipate by NADPH. The activated alpha-aminoadipate is bound to the phosphopantheinyl group of the enzyme itself before it is reduced to (S)-2-amino-6-oxohexanoate. This Saccharomyces cerevisiae (strain ATCC 204508 / S288c) (Baker's yeast) protein is L-2-aminoadipate reductase (LYS2).